Reading from the N-terminus, the 492-residue chain is Steroid 21-hydroxylase (492 aa).

2 residues coordinate heme b: Arg92 and Lys121. Position 232 (Arg232) interacts with 17alpha-hydroxyprogesterone. Residue Arg232 participates in progesterone binding. Heme b contacts are provided by His364, Arg425, and Cys427.

It belongs to the cytochrome P450 family. Requires heme b as cofactor.

The protein localises to the endoplasmic reticulum membrane. The protein resides in the microsome membrane. It catalyses the reaction progesterone + reduced [NADPH--hemoprotein reductase] + O2 = 21-hydroxyprogesterone + oxidized [NADPH--hemoprotein reductase] + H2O + H(+). It carries out the reaction 17alpha-hydroxyprogesterone + reduced [NADPH--hemoprotein reductase] + O2 = 11-deoxycortisol + oxidized [NADPH--hemoprotein reductase] + H2O + H(+). Functionally, a cytochrome P450 monooxygenase that plays a major role in adrenal steroidogenesis. Catalyzes the hydroxylation at C-21 of progesterone and 17alpha-hydroxyprogesterone to respectively form 11-deoxycorticosterone and 11-deoxycortisol, intermediate metabolites in the biosynthetic pathway of mineralocorticoids and glucocorticoids. Mechanistically, uses molecular oxygen inserting one oxygen atom into a substrate, and reducing the second into a water molecule, with two electrons provided by NADPH via cytochrome P450 reductase (CPR; NADPH-ferrihemoprotein reductase). The chain is Steroid 21-hydroxylase (CYP21) from Sus scrofa (Pig).